We begin with the raw amino-acid sequence, 512 residues long: ADP,ATP carrier protein 4 (512 aa).

11 helical membrane passes run Ile-34–Ile-54, Ile-71–Val-91, Ile-102–Phe-122, Phe-157–Trp-177, Phe-192–Glu-212, Phe-231–Ile-251, Leu-296–Lys-316, Ala-330–Leu-350, Phe-361–Val-381, Leu-390–Ile-410, and Ser-476–Thr-496.

It belongs to the ADP/ATP translocase tlc family.

The protein localises to the cell membrane. In terms of biological role, provides the rickettsial cell with host ATP in exchange for rickettsial ADP. This is an obligate exchange system. This energy acquiring activity is an important component of rickettsial parasitism. The protein is ADP,ATP carrier protein 4 (tlcD) of Rickettsia prowazekii (strain Madrid E).